The sequence spans 205 residues: MNKVFPQGENGYTAAESKAHPGGEAGGGHLCCSRRGACLSASLLLLLATVAALIALVTILGLPSCTPGAQACITLTNRTGFLCHDQRSCIPASGVCDGVRTCTHGEDEDESLCRDVPQSLPHFLVAHCGDPASWIYSDQKCDGTNNCGDCSDELSPVTVCPPCGPGWWRCPSTFFKYCDCIPRHLCRDHVQHCSDWSDEYACPGP.

The helical transmembrane segment at 43 to 63 (LLLLLATVAALIALVTILGLP) threads the bilayer. In terms of domain architecture, LDL-receptor class A 1 spans 71–114 (ACITLTNRTGFLCHDQRSCIPASGVCDGVRTCTHGEDEDESLCR). Intrachain disulfides connect Cys-72/Cys-89, Cys-83/Cys-102, Cys-96/Cys-113, Cys-141/Cys-160, Cys-163/Cys-180, and Cys-170/Cys-193. An LDL-receptor class A 2; atypical domain is found at 115–161 (DVPQSLPHFLVAHCGDPASWIYSDQKCDGTNNCGDCSDELSPVTVCP). Residues 162–203 (PCGPGWWRCPSTFFKYCDCIPRHLCRDHVQHCSDWSDEYACP) enclose the LDL-receptor class A 3; atypical domain.

It belongs to the LDLR family.

Its subcellular location is the membrane. The sequence is that of Low-density lipoprotein receptor class A domain-containing protein 1 (LDLRAD1) from Homo sapiens (Human).